The following is a 314-amino-acid chain: Melanoma-associated antigen 2 (314 aa).

Positions 1–20 (MPLEQRSQHCKPEEGLEARG) are enriched in basic and acidic residues. The tract at residues 1-69 (MPLEQRSQHC…SPPHSPQGAS (69 aa)) is disordered. A compositionally biased stretch (low complexity) spans 21–44 (EALGLVGAQAPATEEQQTASSSST). Ser-64 is modified (phosphoserine). The 200-residue stretch at 109-308 (ISRKMVELVH…ISYPPLHERA (200 aa)) folds into the MAGE domain.

Interacts with TRIM28 and UBE2H. Interacts with HDAC3. Interacts with PML (isoform PML-1, isoform PML-2, isoform PML-3, isoform PML-4 and isoform PML-5). In terms of tissue distribution, expressed in many tumors of several types, such as melanoma, head and neck squamous cell carcinoma, lung carcinoma and breast carcinoma, but not in normal tissues except for testes.

It localises to the nucleus. The protein localises to the PML body. In terms of biological role, reduces p53/TP53 transactivation function through recruitment of HDAC3 to p53/TP53 transcription sites. Also represses p73/TP73 activity. Proposed to enhance ubiquitin ligase activity of RING-type zinc finger-containing E3 ubiquitin-protein ligases. In vitro enhances ubiquitin ligase activity of TRIM28 and stimulates p53/TP53 ubiquitination by TRIM28 potentially in presence of Ubl-conjugating enzyme UBE2H. Proposed to act through recruitment and/or stabilization of the Ubl-conjugating enzyme (E2) at the E3:substrate complex. May play a role in embryonal development and tumor transformation or aspects of tumor progression. In vitro promotes cell viability in melanoma cell lines. Antigen recognized on a melanoma by autologous cytolytic T-lymphocytes. Negatively regulates acetylation and sumoylation of PML and represses PML-induced p53/TP53 acetylation and activation. This chain is Melanoma-associated antigen 2 (MAGEA2), found in Homo sapiens (Human).